The chain runs to 317 residues: Olfactory receptor 2T27 (317 aa).

Residues M1–R22 lie on the Extracellular side of the membrane. N5 carries N-linked (GlcNAc...) asparagine glycosylation. A helical transmembrane segment spans residues F23–V43. Topologically, residues V44–Y60 are cytoplasmic. The chain crosses the membrane as a helical span at residues F61–V83. Residues D84–C97 lie on the Extracellular side of the membrane. C97 and C189 are joined by a disulfide. A helical membrane pass occupies residues T98–M118. Over S119–K139 the chain is Cytoplasmic. A helical transmembrane segment spans residues I140–T160. Over P161 to T197 the chain is Extracellular. Residues A198 to Y218 form a helical membrane-spanning segment. Over T219–H244 the chain is Cytoplasmic. Residues M245 to Y265 form a helical membrane-spanning segment. Residues H266–D271 are Extracellular-facing. A helical membrane pass occupies residues K272 to L292. The Cytoplasmic portion of the chain corresponds to R293 to F317.

The protein belongs to the G-protein coupled receptor 1 family.

The protein resides in the cell membrane. Its function is as follows. Odorant receptor. This chain is Olfactory receptor 2T27 (OR2T27), found in Homo sapiens (Human).